A 69-amino-acid polypeptide reads, in one-letter code: Amphipathic peptide OcyC2 (69 aa).

The first 23 residues, 1–23, serve as a signal peptide directing secretion; sequence MKTQFAILMIAVVLMQMLVQTEG. Residue I37 is modified to Isoleucine amide. Residues 41 to 69 constitute a propeptide that is removed on maturation; sequence GLKKLDQLDDTFDSDLSDADVKLLREMFK.

Belongs to the non-disulfide-bridged peptide (NDBP) superfamily. Short antimicrobial peptide (group 4) family. In terms of tissue distribution, expressed by the venom gland.

It localises to the secreted. The protein resides in the target cell membrane. Its function is as follows. Amphipathic peptide with antimicrobial activity. Shows antifungal activity with MIC values ranging from 25 to 200 uM. Does not show antifungal activity against Candida glabrata (ATCC90030) and Candida parapsilosis (ATCC22019) (MIC&gt;400 uM). The sequence is that of Amphipathic peptide OcyC2 from Opisthacanthus cayaporum (South American scorpion).